Here is a 732-residue protein sequence, read N- to C-terminus: Elongation factor 2 (732 aa).

The region spanning 19–260 (ERIRNIGIAA…MVVRHLPSPI (242 aa)) is the tr-type G domain. GTP contacts are provided by residues 28 to 35 (AHIDHGKT), 94 to 98 (DTPGH), and 148 to 151 (NKVD). Residue histidine 597 is modified to Diphthamide.

The protein belongs to the TRAFAC class translation factor GTPase superfamily. Classic translation factor GTPase family. EF-G/EF-2 subfamily.

The protein localises to the cytoplasm. Functionally, catalyzes the GTP-dependent ribosomal translocation step during translation elongation. During this step, the ribosome changes from the pre-translocational (PRE) to the post-translocational (POST) state as the newly formed A-site-bound peptidyl-tRNA and P-site-bound deacylated tRNA move to the P and E sites, respectively. Catalyzes the coordinated movement of the two tRNA molecules, the mRNA and conformational changes in the ribosome. This Pyrococcus horikoshii (strain ATCC 700860 / DSM 12428 / JCM 9974 / NBRC 100139 / OT-3) protein is Elongation factor 2 (fusA).